The following is a 107-amino-acid chain: Large ribosomal subunit protein uL24 (107 aa).

Belongs to the universal ribosomal protein uL24 family. As to quaternary structure, part of the 50S ribosomal subunit.

One of two assembly initiator proteins, it binds directly to the 5'-end of the 23S rRNA, where it nucleates assembly of the 50S subunit. Functionally, one of the proteins that surrounds the polypeptide exit tunnel on the outside of the subunit. The polypeptide is Large ribosomal subunit protein uL24 (Thermoanaerobacter pseudethanolicus (strain ATCC 33223 / 39E) (Clostridium thermohydrosulfuricum)).